We begin with the raw amino-acid sequence, 299 residues long: Bifunctional protein FolD (299 aa).

NADP(+)-binding positions include 169–171 (GRS), serine 194, and isoleucine 235.

Belongs to the tetrahydrofolate dehydrogenase/cyclohydrolase family. As to quaternary structure, homodimer.

The catalysed reaction is (6R)-5,10-methylene-5,6,7,8-tetrahydrofolate + NADP(+) = (6R)-5,10-methenyltetrahydrofolate + NADPH. The enzyme catalyses (6R)-5,10-methenyltetrahydrofolate + H2O = (6R)-10-formyltetrahydrofolate + H(+). Its pathway is one-carbon metabolism; tetrahydrofolate interconversion. Functionally, catalyzes the oxidation of 5,10-methylenetetrahydrofolate to 5,10-methenyltetrahydrofolate and then the hydrolysis of 5,10-methenyltetrahydrofolate to 10-formyltetrahydrofolate. The chain is Bifunctional protein FolD from Nostoc sp. (strain PCC 7120 / SAG 25.82 / UTEX 2576).